Consider the following 372-residue polypeptide: Chaperone protein DnaJ (372 aa).

One can recognise a J domain in the interval 5 to 70 (SYYDILGVSK…KKRQAYDQFG (66 aa)). The segment at 140–218 (GREYKIEIPR…CGGQGLQEKR (79 aa)) adopts a CR-type zinc-finger fold. Zn(2+) contacts are provided by cysteine 153, cysteine 156, cysteine 170, cysteine 173, cysteine 192, cysteine 195, cysteine 206, and cysteine 209. CXXCXGXG motif repeat units lie at residues 153–160 (CVDCNGSG), 170–177 (CPDCGGSG), 192–199 (CPTCRGKG), and 206–213 (CRSCGGQG).

The protein belongs to the DnaJ family. Homodimer. Zn(2+) serves as cofactor.

Its subcellular location is the cytoplasm. Functionally, participates actively in the response to hyperosmotic and heat shock by preventing the aggregation of stress-denatured proteins and by disaggregating proteins, also in an autonomous, DnaK-independent fashion. Unfolded proteins bind initially to DnaJ; upon interaction with the DnaJ-bound protein, DnaK hydrolyzes its bound ATP, resulting in the formation of a stable complex. GrpE releases ADP from DnaK; ATP binding to DnaK triggers the release of the substrate protein, thus completing the reaction cycle. Several rounds of ATP-dependent interactions between DnaJ, DnaK and GrpE are required for fully efficient folding. Also involved, together with DnaK and GrpE, in the DNA replication of plasmids through activation of initiation proteins. The sequence is that of Chaperone protein DnaJ from Leptospira interrogans serogroup Icterohaemorrhagiae serovar copenhageni (strain Fiocruz L1-130).